The primary structure comprises 446 residues: B3 domain-containing protein REM12 (446 aa).

The disordered stretch occupies residues Met-1–Glu-46. 2 DNA-binding regions (TF-B3) span residues Cys-56–Thr-153 and Phe-193–Gln-289. Residues Ser-295–Ser-334 form a disordered region. Positions Tyr-341–Asn-435 form a DNA-binding region, TF-B3 3.

It is found in the nucleus. In Arabidopsis thaliana (Mouse-ear cress), this protein is B3 domain-containing protein REM12 (REM12).